A 349-amino-acid polypeptide reads, in one-letter code: Glycerol-3-phosphate dehydrogenase [NAD(+)], cytoplasmic (349 aa).

10–15 contacts NAD(+); the sequence is GSGNWG. Lysine 120 contributes to the substrate binding site. An NAD(+)-binding site is contributed by alanine 153. Residue lysine 204 is the Proton acceptor of the active site. Arginine 269 is an NAD(+) binding site. 269 to 270 is a binding site for substrate; sequence RN. An N6-succinyllysine modification is found at lysine 289. NAD(+) contacts are provided by lysine 296 and glutamine 298. Phosphotyrosine is present on tyrosine 326.

Belongs to the NAD-dependent glycerol-3-phosphate dehydrogenase family. Homodimer.

Its subcellular location is the cytoplasm. The enzyme catalyses sn-glycerol 3-phosphate + NAD(+) = dihydroxyacetone phosphate + NADH + H(+). Its function is as follows. Has glycerol-3-phosphate dehydrogenase activity. The chain is Glycerol-3-phosphate dehydrogenase [NAD(+)], cytoplasmic (GPD1) from Bos taurus (Bovine).